The sequence spans 551 residues: Mesoderm induction early response protein 3 (551 aa).

The span at Met-1 to Ser-16 shows a compositional bias: low complexity. Disordered stretches follow at residues Met-1 to Gly-62 and Leu-113 to Pro-169. Over residues Ser-17–Glu-36 the composition is skewed to basic and acidic residues. Residues Ser-52, Ser-53, and Ser-114 each carry the phosphoserine modification. The span at Gln-121–His-134 shows a compositional bias: polar residues. Over residues Lys-154 to Thr-163 the composition is skewed to acidic residues. Ser-156 is subject to Phosphoserine. A Phosphothreonine modification is found at Thr-163. Phosphoserine occurs at positions 165 and 168. Residues Arg-174–Gly-273 enclose the ELM2 domain. The region spanning Glu-278–Arg-330 is the SANT domain.

The protein resides in the nucleus. Its function is as follows. Transcriptional repressor. In Mus musculus (Mouse), this protein is Mesoderm induction early response protein 3 (Mier3).